The chain runs to 458 residues: Phosphoglucosamine mutase (458 aa).

Catalysis depends on Ser-100, which acts as the Phosphoserine intermediate. Residues Ser-100, Asp-239, Asp-241, and Asp-243 each contribute to the Mg(2+) site. Ser-100 carries the post-translational modification Phosphoserine.

The protein belongs to the phosphohexose mutase family. It depends on Mg(2+) as a cofactor. Post-translationally, activated by phosphorylation.

The enzyme catalyses alpha-D-glucosamine 1-phosphate = D-glucosamine 6-phosphate. Its function is as follows. Catalyzes the conversion of glucosamine-6-phosphate to glucosamine-1-phosphate. This is Phosphoglucosamine mutase from Dictyoglomus thermophilum (strain ATCC 35947 / DSM 3960 / H-6-12).